Consider the following 346-residue polypeptide: tRNA (guanine-N(7)-)-methyltransferase (346 aa).

S-adenosyl-L-methionine-binding positions include G101 and 124 to 125; that span reads EI. The tract at residues 149 to 191 is disordered; it reads LKSAGGGGSDAAPESPAAPPTPSEAASPDSTTPSEQQAPTTLV. The span at 171–182 shows a compositional bias: low complexity; it reads SEAASPDSTTPS. Residues 204–205 and C224 contribute to the S-adenosyl-L-methionine site; that span reads NT. The active site involves D227. 318-320 serves as a coordination point for S-adenosyl-L-methionine; the sequence is TEE.

The protein belongs to the class I-like SAM-binding methyltransferase superfamily. TrmB family. In terms of assembly, forms a complex with trm82.

It localises to the nucleus. It carries out the reaction guanosine(46) in tRNA + S-adenosyl-L-methionine = N(7)-methylguanosine(46) in tRNA + S-adenosyl-L-homocysteine. The protein operates within tRNA modification; N(7)-methylguanine-tRNA biosynthesis. Catalyzes the formation of N(7)-methylguanine at position 46 (m7G46) in tRNA. The sequence is that of tRNA (guanine-N(7)-)-methyltransferase (trm8) from Aspergillus terreus (strain NIH 2624 / FGSC A1156).